The sequence spans 264 residues: MVLYFIGLGLYDEKDITLKGLETARRCDKVFAEFYTSLLAGTTLEKIEELIGKPIVRLSREDVELNFERIVLPEAKDKDVAFLTAGDPMVATTHSDLRIRAKKAGVKSYVIHAPSIYSAVAITGLQIYKFGKSATVAYPEKNWFPTSHYDVIRDNKERGLHTLLFLDIKADQNRYMTANEAMEILLKVEEMKGEGVFTPETLVVVLARAGSLEPTLRAGYVRELINEDFGRQPHVLIVPGRLHIVEAEYLVEFAGAPEKILEEV.

S-adenosyl-L-methionine is bound by residues leucine 10, aspartate 87, valine 90, 115-116 (SI), leucine 166, alanine 209, and histidine 234.

It belongs to the diphthine synthase family. Homodimer.

The enzyme catalyses 2-[(3S)-amino-3-carboxypropyl]-L-histidyl-[translation elongation factor 2] + 3 S-adenosyl-L-methionine = diphthine-[translation elongation factor 2] + 3 S-adenosyl-L-homocysteine + 3 H(+). The protein operates within protein modification; peptidyl-diphthamide biosynthesis. In terms of biological role, S-adenosyl-L-methionine-dependent methyltransferase that catalyzes the trimethylation of the amino group of the modified target histidine residue in translation elongation factor 2 (EF-2), to form an intermediate called diphthine. The three successive methylation reactions represent the second step of diphthamide biosynthesis. The polypeptide is Diphthine synthase (Thermococcus kodakarensis (strain ATCC BAA-918 / JCM 12380 / KOD1) (Pyrococcus kodakaraensis (strain KOD1))).